The primary structure comprises 436 residues: Probable transporter MCH1 (436 aa).

Transmembrane regions (helical) follow at residues 27–47 (VVAF…LLFT), 66–86 (MISS…GYLA), 93–113 (LLSL…SYLV), 119–139 (SVIG…SLYF), 155–175 (LAIS…AQIL), 188–208 (LEVV…ASFV), and 249–269 (FVSF…ILNI). N-linked (GlcNAc...) asparagine glycosylation occurs at Asn-278. 5 consecutive transmembrane segments (helical) span residues 295-312 (VSIM…LGVL), 325-345 (LLVV…SAIL), 347-367 (GVSY…IWGI), 373-393 (TWGS…MFYG), and 410-430 (TAGA…IWYA).

The protein belongs to the major facilitator superfamily.

The protein localises to the vacuole membrane. Probable transporter. The sequence is that of Probable transporter MCH1 (MCH1) from Candida albicans (strain SC5314 / ATCC MYA-2876) (Yeast).